The following is a 208-amino-acid chain: 2-phospho-L-lactate guanylyltransferase (208 aa).

This sequence belongs to the CofC family. As to quaternary structure, homodimer.

It carries out the reaction (2S)-2-phospholactate + GTP + H(+) = (2S)-lactyl-2-diphospho-5'-guanosine + diphosphate. Its pathway is cofactor biosynthesis; coenzyme F420 biosynthesis. Functionally, guanylyltransferase that catalyzes the activation of (2S)-2-phospholactate (2-PL) as (2S)-lactyl-2-diphospho-5'-guanosine, via the condensation of 2-PL with GTP. It is involved in the biosynthesis of coenzyme F420, a hydride carrier cofactor. This chain is 2-phospho-L-lactate guanylyltransferase, found in Haloarcula marismortui (strain ATCC 43049 / DSM 3752 / JCM 8966 / VKM B-1809) (Halobacterium marismortui).